A 96-amino-acid chain; its full sequence is MLKVNEYFAGKVKSIGFDSSSIGLTSVGVMEEGEYTFTTALPEEMTVITGALKVLLPGSPDWQVFMPGEKFFVPAHSEFNLQVADATAYLCRYLSK.

This sequence belongs to the nucleoside phosphorylase PpnP family.

The enzyme catalyses a purine D-ribonucleoside + phosphate = a purine nucleobase + alpha-D-ribose 1-phosphate. It catalyses the reaction adenosine + phosphate = alpha-D-ribose 1-phosphate + adenine. It carries out the reaction cytidine + phosphate = cytosine + alpha-D-ribose 1-phosphate. The catalysed reaction is guanosine + phosphate = alpha-D-ribose 1-phosphate + guanine. The enzyme catalyses inosine + phosphate = alpha-D-ribose 1-phosphate + hypoxanthine. It catalyses the reaction thymidine + phosphate = 2-deoxy-alpha-D-ribose 1-phosphate + thymine. It carries out the reaction uridine + phosphate = alpha-D-ribose 1-phosphate + uracil. The catalysed reaction is xanthosine + phosphate = alpha-D-ribose 1-phosphate + xanthine. Functionally, catalyzes the phosphorolysis of diverse nucleosides, yielding D-ribose 1-phosphate and the respective free bases. Can use uridine, adenosine, guanosine, cytidine, thymidine, inosine and xanthosine as substrates. Also catalyzes the reverse reactions. The protein is Pyrimidine/purine nucleoside phosphorylase of Serratia proteamaculans (strain 568).